The primary structure comprises 563 residues: Probable terpene synthase 4 (563 aa).

Mg(2+) contacts are provided by aspartate 316, aspartate 320, and glutamate 469. The DDXXD motif motif lies at aspartate 316–aspartate 320.

Belongs to the terpene synthase family. Requires Mg(2+) as cofactor.

Functionally, probable sesquiterpene synthase. This is Probable terpene synthase 4 (TPS4) from Ricinus communis (Castor bean).